The primary structure comprises 317 residues: Probable cell division protein WhiA (317 aa).

The H-T-H motif DNA-binding region spans 278-311 (SLQGLGELLDPQVGKSGVNHRLRKIGEKADELRQ).

Belongs to the WhiA family.

In terms of biological role, involved in cell division and chromosome segregation. The protein is Probable cell division protein WhiA of Lachnospira eligens (strain ATCC 27750 / DSM 3376 / VPI C15-48 / C15-B4) (Eubacterium eligens).